The primary structure comprises 254 residues: Pyruvate dehydrogenase complex repressor (254 aa).

The HTH gntR-type domain occupies Pro9–Ser77. Positions Glu37–Gln56 form a DNA-binding region, H-T-H motif.

Its function is as follows. Transcriptional repressor for the pyruvate dehydrogenase complex genes aceEF and lpd. The polypeptide is Pyruvate dehydrogenase complex repressor (pdhR) (Escherichia coli O6:H1 (strain CFT073 / ATCC 700928 / UPEC)).